A 448-amino-acid chain; its full sequence is Chromosomal replication initiator protein DnaA (448 aa).

Positions 1 to 73 (MNAQLKQLWT…INAIKLITSK (73 aa)) are domain I, interacts with DnaA modulators. The domain II stretch occupies residues 73-109 (KKYNIEFSITSEEIFNNQQLKPKSSNDNIVVNDEMTS). The segment at 110–326 (ILNPKYTFDS…GALIRIVAYS (217 aa)) is domain III, AAA+ region. ATP contacts are provided by Gly-154, Gly-156, Lys-157, and Thr-158. Positions 327–448 (SLTNREISVD…DDLNKKITNN (122 aa)) are domain IV, binds dsDNA.

It belongs to the DnaA family. In terms of assembly, oligomerizes as a right-handed, spiral filament on DNA at oriC.

The protein localises to the cytoplasm. Functionally, plays an essential role in the initiation and regulation of chromosomal replication. ATP-DnaA binds to the origin of replication (oriC) to initiate formation of the DNA replication initiation complex once per cell cycle. Binds the DnaA box (a 9 base pair repeat at the origin) and separates the double-stranded (ds)DNA. Forms a right-handed helical filament on oriC DNA; dsDNA binds to the exterior of the filament while single-stranded (ss)DNA is stabiized in the filament's interior. The ATP-DnaA-oriC complex binds and stabilizes one strand of the AT-rich DNA unwinding element (DUE), permitting loading of DNA polymerase. After initiation quickly degrades to an ADP-DnaA complex that is not apt for DNA replication. Binds acidic phospholipids. This Clostridium novyi (strain NT) protein is Chromosomal replication initiator protein DnaA.